The chain runs to 367 residues: Chorismate synthase (367 aa).

Residues 41–60 form a disordered region; that stretch reads FTHDLQRRASGKSRHTSARR. Residues R48 and R54 each contribute to the NADP(+) site. FMN is bound by residues 125 to 127, 238 to 239, G278, 293 to 297, and R319; these read RSS, NA, and KPTSS.

The protein belongs to the chorismate synthase family. Homotetramer. FMNH2 is required as a cofactor.

It catalyses the reaction 5-O-(1-carboxyvinyl)-3-phosphoshikimate = chorismate + phosphate. It functions in the pathway metabolic intermediate biosynthesis; chorismate biosynthesis; chorismate from D-erythrose 4-phosphate and phosphoenolpyruvate: step 7/7. In terms of biological role, catalyzes the anti-1,4-elimination of the C-3 phosphate and the C-6 proR hydrogen from 5-enolpyruvylshikimate-3-phosphate (EPSP) to yield chorismate, which is the branch point compound that serves as the starting substrate for the three terminal pathways of aromatic amino acid biosynthesis. This reaction introduces a second double bond into the aromatic ring system. The sequence is that of Chorismate synthase from Xanthomonas axonopodis pv. citri (strain 306).